The chain runs to 255 residues: Acetylglutamate kinase (255 aa).

Residues 40-41 (GG), R62, and N153 contribute to the substrate site.

Belongs to the acetylglutamate kinase family. ArgB subfamily.

It is found in the cytoplasm. It catalyses the reaction N-acetyl-L-glutamate + ATP = N-acetyl-L-glutamyl 5-phosphate + ADP. It participates in amino-acid biosynthesis; L-arginine biosynthesis; N(2)-acetyl-L-ornithine from L-glutamate: step 2/4. Catalyzes the ATP-dependent phosphorylation of N-acetyl-L-glutamate. The chain is Acetylglutamate kinase from Bacillus cereus (strain B4264).